The primary structure comprises 344 residues: MEARLKELKQKALKLIEEAKELKSLNDVRVAYLGKKGPITEVLRGMGKLSPEERPRMGALVNEVREAIQTRLEEKVSNLEKAVMEAKLASETIDVTLPGRPVETGCHHPLTAVVEQIEDVFIGMGYEVAEGTEVEKDYYNFEALNLPKDHPARDMQDTFYITEETLLRTHTSSVQARTMENNKEKGPIKIICPGKVYRRDDDDATHSHQFMQIEGLVIDKNIRMSDLKGTLQVFVKKMFGEDREIRLRPSFFPFTEPSVEMDISCMMCHGKGCGTCKGTGWIEILGAGMVHPNVLEMAGYDSKEYQGFAFGMGAERIAMLKYGVDDIRHFYTNDVRFLQQFKRA.

Glu-256 contacts Mg(2+).

The protein belongs to the class-II aminoacyl-tRNA synthetase family. Phe-tRNA synthetase alpha subunit type 1 subfamily. In terms of assembly, tetramer of two alpha and two beta subunits. Requires Mg(2+) as cofactor.

The protein localises to the cytoplasm. It carries out the reaction tRNA(Phe) + L-phenylalanine + ATP = L-phenylalanyl-tRNA(Phe) + AMP + diphosphate + H(+). The chain is Phenylalanine--tRNA ligase alpha subunit from Bacillus cytotoxicus (strain DSM 22905 / CIP 110041 / 391-98 / NVH 391-98).